Reading from the N-terminus, the 249-residue chain is Methylthioribulose-1-phosphate dehydratase (249 aa).

The disordered stretch occupies residues 1–25 (MVDIKPEQTQEGNNNDHLVQSDDPE). A compositionally biased stretch (polar residues) spans 9-18 (TQEGNNNDHL). C105 lines the substrate pocket. Zn(2+) is bound by residues H122 and H124. The active-site Proton donor/acceptor is E151. H207 contributes to the Zn(2+) binding site.

It belongs to the aldolase class II family. MtnB subfamily. The cofactor is Zn(2+).

The protein localises to the cytoplasm. It carries out the reaction 5-(methylsulfanyl)-D-ribulose 1-phosphate = 5-methylsulfanyl-2,3-dioxopentyl phosphate + H2O. Its pathway is amino-acid biosynthesis; L-methionine biosynthesis via salvage pathway; L-methionine from S-methyl-5-thio-alpha-D-ribose 1-phosphate: step 2/6. Its function is as follows. Catalyzes the dehydration of methylthioribulose-1-phosphate (MTRu-1-P) into 2,3-diketo-5-methylthiopentyl-1-phosphate (DK-MTP-1-P). This chain is Methylthioribulose-1-phosphate dehydratase, found in Arthroderma otae (strain ATCC MYA-4605 / CBS 113480) (Microsporum canis).